A 209-amino-acid chain; its full sequence is Large ribosomal subunit protein uL4 (209 aa).

A disordered region spans residues Gly-46–Arg-71. Residues Ser-59 to Arg-71 are compositionally biased toward basic residues.

The protein belongs to the universal ribosomal protein uL4 family. Part of the 50S ribosomal subunit.

Functionally, one of the primary rRNA binding proteins, this protein initially binds near the 5'-end of the 23S rRNA. It is important during the early stages of 50S assembly. It makes multiple contacts with different domains of the 23S rRNA in the assembled 50S subunit and ribosome. Forms part of the polypeptide exit tunnel. In Borreliella afzelii (strain PKo) (Borrelia afzelii), this protein is Large ribosomal subunit protein uL4.